The sequence spans 287 residues: Acetyl-coenzyme A carboxylase carboxyl transferase subunit beta (287 aa).

The CoA carboxyltransferase N-terminal domain maps to 28–287 (LWKKCPKCEN…ILSLLTNKVA (260 aa)). Positions 32, 35, 51, and 54 each coordinate Zn(2+). Residues 32-54 (CPKCENVLYRPELEKNLDVCPKC) form a C4-type zinc finger.

It belongs to the AccD/PCCB family. In terms of assembly, acetyl-CoA carboxylase is a heterohexamer composed of biotin carboxyl carrier protein (AccB), biotin carboxylase (AccC) and two subunits each of ACCase subunit alpha (AccA) and ACCase subunit beta (AccD). Zn(2+) serves as cofactor.

The protein localises to the cytoplasm. It carries out the reaction N(6)-carboxybiotinyl-L-lysyl-[protein] + acetyl-CoA = N(6)-biotinyl-L-lysyl-[protein] + malonyl-CoA. It participates in lipid metabolism; malonyl-CoA biosynthesis; malonyl-CoA from acetyl-CoA: step 1/1. Component of the acetyl coenzyme A carboxylase (ACC) complex. Biotin carboxylase (BC) catalyzes the carboxylation of biotin on its carrier protein (BCCP) and then the CO(2) group is transferred by the transcarboxylase to acetyl-CoA to form malonyl-CoA. The chain is Acetyl-coenzyme A carboxylase carboxyl transferase subunit beta from Marinomonas sp. (strain MWYL1).